Reading from the N-terminus, the 163-residue chain is NADH-quinone oxidoreductase subunit I (163 aa).

2 4Fe-4S ferredoxin-type domains span residues 54–84 (LRRY…IDAE) and 94–123 (TRYD…EGPN). 8 residues coordinate [4Fe-4S] cluster: C64, C67, C70, C74, C103, C106, C109, and C113.

It belongs to the complex I 23 kDa subunit family. As to quaternary structure, NDH-1 is composed of at least 14 different subunits, Nqo1 to Nqo14. The complex has a L-shaped structure, with the hydrophobic arm (subunits Nqo7, Nqo8, Nqo10 to Nqo14) embedded in the inner membrane and the hydrophilic peripheral arm (subunits Nqo1 to Nqo6, Nqo9) protruding into the bacterial cytoplasm. The hydrophilic domain contains all the redox centers. NADH-quinone oxidoreductase forms a supercomplex with ubiquinol-cytochrome c reductase complex (complex III or cytochrome b-c1 complex) and cytochrome c oxidase (complex IV), which stabilizes the NADH-quinone oxidoreductase complex. [4Fe-4S] cluster is required as a cofactor.

It localises to the cell inner membrane. The catalysed reaction is a quinone + NADH + 5 H(+)(in) = a quinol + NAD(+) + 4 H(+)(out). NDH-1 shuttles electrons from NADH, via FMN and iron-sulfur (Fe-S) centers, to quinones in the respiratory chain. The immediate electron acceptor for the enzyme in this species is believed to be ubiquinone. Couples the redox reaction to proton translocation (for every two electrons transferred, four hydrogen ions are translocated across the cytoplasmic membrane), and thus conserves the redox energy in a proton gradient. This is NADH-quinone oxidoreductase subunit I from Paracoccus denitrificans (strain Pd 1222).